Here is a 363-residue protein sequence, read N- to C-terminus: Aminomethyltransferase (363 aa).

It belongs to the GcvT family. In terms of assembly, the glycine cleavage system is composed of four proteins: P, T, L and H.

The catalysed reaction is N(6)-[(R)-S(8)-aminomethyldihydrolipoyl]-L-lysyl-[protein] + (6S)-5,6,7,8-tetrahydrofolate = N(6)-[(R)-dihydrolipoyl]-L-lysyl-[protein] + (6R)-5,10-methylene-5,6,7,8-tetrahydrofolate + NH4(+). Its function is as follows. The glycine cleavage system catalyzes the degradation of glycine. In Staphylococcus saprophyticus subsp. saprophyticus (strain ATCC 15305 / DSM 20229 / NCIMB 8711 / NCTC 7292 / S-41), this protein is Aminomethyltransferase.